A 200-amino-acid chain; its full sequence is Dephospho-CoA kinase (200 aa).

The region spanning 4 to 200 (TIGLTGSVAT…TFIKRFVKNK (197 aa)) is the DPCK domain. Position 12 to 17 (12 to 17 (ATGKST)) interacts with ATP.

The protein belongs to the CoaE family.

Its subcellular location is the cytoplasm. It catalyses the reaction 3'-dephospho-CoA + ATP = ADP + CoA + H(+). The protein operates within cofactor biosynthesis; coenzyme A biosynthesis; CoA from (R)-pantothenate: step 5/5. Functionally, catalyzes the phosphorylation of the 3'-hydroxyl group of dephosphocoenzyme A to form coenzyme A. In Listeria monocytogenes serotype 4b (strain F2365), this protein is Dephospho-CoA kinase.